A 138-amino-acid polypeptide reads, in one-letter code: Cysteine desulfuration protein SufE (138 aa).

Cys51 acts as the Cysteine persulfide intermediate in catalysis.

The protein belongs to the SufE family. As to quaternary structure, homodimer. Interacts with SufS.

The protein resides in the cytoplasm. Its pathway is cofactor biosynthesis; iron-sulfur cluster biosynthesis. Participates in cysteine desulfuration mediated by SufS. Cysteine desulfuration mobilizes sulfur from L-cysteine to yield L-alanine and constitutes an essential step in sulfur metabolism for biosynthesis of a variety of sulfur-containing biomolecules. Functions as a sulfur acceptor for SufS, by mediating the direct transfer of the sulfur atom from the S-sulfanylcysteine of SufS, an intermediate product of cysteine desulfuration process. The sequence is that of Cysteine desulfuration protein SufE from Escherichia fergusonii (strain ATCC 35469 / DSM 13698 / CCUG 18766 / IAM 14443 / JCM 21226 / LMG 7866 / NBRC 102419 / NCTC 12128 / CDC 0568-73).